A 457-amino-acid polypeptide reads, in one-letter code: Pup--protein ligase (457 aa).

Position 9 (Glu-9) interacts with Mg(2+). Arg-53 is an ATP binding site. Tyr-55 provides a ligand contact to Mg(2+). Asp-57 acts as the Proton acceptor in catalysis. Position 63 (Glu-63) interacts with Mg(2+). Thr-66 and Trp-424 together coordinate ATP.

Belongs to the Pup ligase/Pup deamidase family. Pup-conjugating enzyme subfamily.

The catalysed reaction is ATP + [prokaryotic ubiquitin-like protein]-L-glutamate + [protein]-L-lysine = ADP + phosphate + N(6)-([prokaryotic ubiquitin-like protein]-gamma-L-glutamyl)-[protein]-L-lysine.. Its pathway is protein degradation; proteasomal Pup-dependent pathway. It participates in protein modification; protein pupylation. Catalyzes the covalent attachment of the prokaryotic ubiquitin-like protein modifier Pup to the proteasomal substrate proteins, thereby targeting them for proteasomal degradation. This tagging system is termed pupylation. The ligation reaction involves the side-chain carboxylate of the C-terminal glutamate of Pup and the side-chain amino group of a substrate lysine. In Xylanimonas cellulosilytica (strain DSM 15894 / JCM 12276 / CECT 5975 / KCTC 9989 / LMG 20990 / NBRC 107835 / XIL07), this protein is Pup--protein ligase.